The primary structure comprises 853 residues: DNA mismatch repair protein MutS (853 aa).

Residue 614-621 coordinates ATP; sequence GPNMGGKS.

Belongs to the DNA mismatch repair MutS family.

This protein is involved in the repair of mismatches in DNA. It is possible that it carries out the mismatch recognition step. This protein has a weak ATPase activity. In Shigella dysenteriae serotype 1 (strain Sd197), this protein is DNA mismatch repair protein MutS.